We begin with the raw amino-acid sequence, 194 residues long: Nucleoside triphosphate pyrophosphatase (194 aa).

Asp71 acts as the Proton acceptor in catalysis.

This sequence belongs to the Maf family. It depends on a divalent metal cation as a cofactor.

The protein localises to the cytoplasm. The catalysed reaction is a ribonucleoside 5'-triphosphate + H2O = a ribonucleoside 5'-phosphate + diphosphate + H(+). It carries out the reaction a 2'-deoxyribonucleoside 5'-triphosphate + H2O = a 2'-deoxyribonucleoside 5'-phosphate + diphosphate + H(+). Its function is as follows. Nucleoside triphosphate pyrophosphatase. May have a dual role in cell division arrest and in preventing the incorporation of modified nucleotides into cellular nucleic acids. This is Nucleoside triphosphate pyrophosphatase from Paramagnetospirillum magneticum (strain ATCC 700264 / AMB-1) (Magnetospirillum magneticum).